We begin with the raw amino-acid sequence, 535 residues long: CTP synthase (535 aa).

The amidoligase domain stretch occupies residues 1–267 (MTKYIFVTGG…DKLVCDHMKL (267 aa)). Ser-13 serves as a coordination point for CTP. Ser-13 serves as a coordination point for UTP. 14-19 (SLGKGI) is an ATP binding site. Tyr-54 provides a ligand contact to L-glutamine. Residue Asp-71 participates in ATP binding. The Mg(2+) site is built by Asp-71 and Glu-141. Residues 148-150 (DIE), 188-193 (KTKPTQ), and Lys-224 each bind CTP. UTP is bound by residues 188–193 (KTKPTQ) and Lys-224. Residues 292–534 (TISLVGKYVE…IGASVQAAEQ (243 aa)) form the Glutamine amidotransferase type-1 domain. Gly-354 is an L-glutamine binding site. The active-site Nucleophile; for glutamine hydrolysis is the Cys-381. L-glutamine contacts are provided by residues 382–385 (LGMQ), Glu-405, and Arg-462. Active-site residues include His-507 and Glu-509.

Belongs to the CTP synthase family. In terms of assembly, homotetramer.

It catalyses the reaction UTP + L-glutamine + ATP + H2O = CTP + L-glutamate + ADP + phosphate + 2 H(+). It carries out the reaction L-glutamine + H2O = L-glutamate + NH4(+). The enzyme catalyses UTP + NH4(+) + ATP = CTP + ADP + phosphate + 2 H(+). The protein operates within pyrimidine metabolism; CTP biosynthesis via de novo pathway; CTP from UDP: step 2/2. Its activity is regulated as follows. Allosterically activated by GTP, when glutamine is the substrate; GTP has no effect on the reaction when ammonia is the substrate. The allosteric effector GTP functions by stabilizing the protein conformation that binds the tetrahedral intermediate(s) formed during glutamine hydrolysis. Inhibited by the product CTP, via allosteric rather than competitive inhibition. Catalyzes the ATP-dependent amination of UTP to CTP with either L-glutamine or ammonia as the source of nitrogen. Regulates intracellular CTP levels through interactions with the four ribonucleotide triphosphates. This chain is CTP synthase, found in Bacillus velezensis (strain DSM 23117 / BGSC 10A6 / LMG 26770 / FZB42) (Bacillus amyloliquefaciens subsp. plantarum).